The following is a 934-amino-acid chain: MARRSVLYFILLNALINKGQACFCDHYAWTQWTSCSKTCNSGTQSRHRQIVVDKYYQENFCEQICSKQETRECNWQRCPINCLLGDFGPWSDCDPCIEKQSKVRSVLRPSQFGGQPCTAPLVAFQPCIPSKLCKIEEADCKNKFRCDSGRCIARKLECNGENDCGDNSDERDCGRTKAVCTRKYNPIPSVQLMGNGFHFLAGEPRGEVLDNSFTGGICKTVKSSRTSNPYRVPANLENVGFEVQTAEDDLKTDFYKDLTSLGHNENQQGSFSSQGGSSFSVPIFYSSKRSENINHNSAFKQAIQASHKKDSSFIRIHKVMKVLNFTTKAKDLHLSDVFLKALNHLPLEYNSALYSRIFDDFGTHYFTSGSLGGVYDLLYQFSSEELKNSGLTEEEAKHCVRIETKKRVLFAKKTKVEHRCTTNKLSEKHEGSFIQGAEKSISLIRGGRSEYGAALAWEKGSSGLEEKTFSEWLESVKENPAVIDFELAPIVDLVRNIPCAVTKRNNLRKALQEYAAKFDPCQCAPCPNNGRPTLSGTECLCVCQSGTYGENCEKQSPDYKSNAVDGQWGCWSSWSTCDATYKRSRTRECNNPAPQRGGKRCEGEKRQEEDCTFSIMENNGQPCINDDEEMKEVDLPEIEADSGCPQPVPPENGFIRNEKQLYLVGEDVEISCLTGFETVGYQYFRCLPDGTWRQGDVECQRTECIKPVVQEVLTITPFQRLYRIGESIELTCPKGFVVAGPSRYTCQGNSWTPPISNSLTCEKDTLTKLKGHCQLGQKQSGSECICMSPEEDCSHHSEDLCVFDTDSNDYFTSPACKFLAEKCLNNQQLHFLHIGSCQDGRQLEWGLERTRLSSNSTKKESCGYDTCYDWEKCSASTSKCVCLLPPQCFKGGNQLYCVKMGSSTSEKTLNICEVGTIRCANRKMEILHPGKCLA.

An N-terminal signal peptide occupies residues 1-21; sequence MARRSVLYFILLNALINKGQA. 11 disulfides stabilise this stretch: cysteine 22/cysteine 61, cysteine 24/cysteine 65, cysteine 35/cysteine 73, cysteine 39/cysteine 78, cysteine 82/cysteine 117, cysteine 93/cysteine 127, cysteine 96/cysteine 133, cysteine 140/cysteine 151, cysteine 146/cysteine 164, cysteine 158/cysteine 173, and cysteine 180/cysteine 218. TSP type-1 domains lie at 22 to 79 and 81 to 134; these read CFCD…QRCP and NCLL…KLCK. A glycan (C-linked (Man) tryptophan) is linked at tryptophan 29. Tryptophan 32 carries C-linked (Man) tryptophan; partial glycosylation. Threonine 38 carries an O-linked (Fuc...) threonine glycan. C-linked (Man) tryptophan; partial glycosylation is present at tryptophan 90. Residues 138 to 175 enclose the LDL-receptor class A domain; the sequence is ADCKNKFRCDSGRCIARKLECNGENDCGDNSDERDCGR. Ca(2+) contacts are provided by leucine 156, asparagine 159, glutamate 161, aspartate 163, aspartate 169, and glutamate 170. In terms of domain architecture, MACPF spans 176–522; that stretch reads TKAVCTRKYN…EYAAKFDPCQ (347 aa). A beta stranded membrane pass occupies residues 278–290; it reads SFSVPIFYSSKRS. Residue asparagine 324 is glycosylated (N-linked (GlcNAc...) asparagine). The O-linked (Fuc...) threonine glycan is linked to threonine 392. 16 disulfides stabilise this stretch: cysteine 399–cysteine 420, cysteine 499–cysteine 623, cysteine 521–cysteine 570, cysteine 523–cysteine 539, cysteine 526–cysteine 541, cysteine 543–cysteine 552, cysteine 577–cysteine 611, cysteine 589–cysteine 601, cysteine 644–cysteine 686, cysteine 672–cysteine 699, cysteine 704–cysteine 746, cysteine 732–cysteine 761, cysteine 773–cysteine 823, cysteine 784–cysteine 801, cysteine 786–cysteine 837, and cysteine 793–cysteine 816. Residues 402–415 form a beta stranded membrane-spanning segment; it reads IETKKRVLFAKKTK. Positions 523–553 constitute an EGF-like domain; it reads CAPCPNNGRPTLSGTECLCVCQSGTYGENCE. In terms of domain architecture, TSP type-1 3 spans 565-612; that stretch reads DGQWGCWSSWSTCDATYKRSRTRECNNPAPQRGGKRCEGEKRQEEDCT. Residues tryptophan 568, tryptophan 571, and tryptophan 574 are each glycosylated (C-linked (Man) tryptophan; partial). CCP regions lie at residues 611-688 and 689-765; these read CTFS…RCLP and DGTW…EKDT. Sushi domains lie at 642 to 701 and 702 to 763; these read SGCP…ECQR and TECI…TCEK. The segment at 642-934 is C5b-binding domain; that stretch reads SGCPQPVPPE…EILHPGKCLA (293 aa). A factor I module (FIM) 1 region spans residues 766–840; sequence LTKLKGHCQL…FLHIGSCQDG (75 aa). A Kazal-like 1 domain is found at 780-839; that stretch reads SGSECICMSPEEDCSHHSEDLCVFDTDSNDYFTSPACKFLAEKCLNNQQLHFLHIGSCQD. N-linked (GlcNAc...) asparagine glycosylation occurs at asparagine 855. The factor I module (FIM) 2 stretch occupies residues 858–934; the sequence is KKESCGYDTC…EILHPGKCLA (77 aa). Disulfide bonds link cysteine 862/cysteine 873, cysteine 867/cysteine 919, cysteine 880/cysteine 897, cysteine 882/cysteine 932, and cysteine 888/cysteine 912. In terms of domain architecture, Kazal-like 2 spans 876–934; sequence STSKCVCLLPPQCFKGGNQLYCVKMGSSTSEKTLNICEVGTIRCANRKMEILHPGKCLA.

This sequence belongs to the complement C6/C7/C8/C9 family. In terms of assembly, component of the membrane attack complex (MAC), composed of complement C5b, C6, C7, C8A, C8B, C8G and multiple copies of the pore-forming subunit C9. Post-translationally, all cysteine residues are assumed to be cross-linked to one another. Individual modules containing an even number of conserved cysteine residues are supposed to have disulfide linkages only within the same module.

It is found in the secreted. It localises to the target cell membrane. Membrane attack complex (MAC) assembly is inhibited by CD59, thereby protecting self-cells from damage during complement activation. MAC assembly is also inhibited by clusterin (CLU) chaperones that inhibit polymerization of C9. Its function is as follows. Component of the membrane attack complex (MAC), a multiprotein complex activated by the complement cascade, which inserts into a target cell membrane and forms a pore, leading to target cell membrane rupture and cell lysis. The MAC is initiated by proteolytic cleavage of C5 into complement C5b in response to the classical, alternative, lectin and GZMK complement pathways. The complement pathways consist in a cascade of proteins that leads to phagocytosis and breakdown of pathogens and signaling that strengthens the adaptive immune system. Together with component C5b, involved in MAC complex assembly: complement C5b and C6 associate with the outer leaflet of target cell membrane, reducing the energy for membrane bending. This Homo sapiens (Human) protein is Complement component C6.